Consider the following 185-residue polypeptide: MYLFINIIWRNFISKNNLPKANREIKAKEVRLVDENSEMYGVVNIREALDMAERAGLDLVEISPNAVPPVCKILDFGKFKYESKKRLHEARKKQKVVVLKEMKFKPNISIGDFETKLRKIKEFLKDGDKVKISLWFKGREILHKEVGHELFKRIELALEGLIKIDQHAKMEGKQMIMIVSPDIKV.

The protein belongs to the IF-3 family. In terms of assembly, monomer.

The protein resides in the cytoplasm. In terms of biological role, IF-3 binds to the 30S ribosomal subunit and shifts the equilibrium between 70S ribosomes and their 50S and 30S subunits in favor of the free subunits, thus enhancing the availability of 30S subunits on which protein synthesis initiation begins. In Rickettsia prowazekii (strain Madrid E), this protein is Translation initiation factor IF-3.